Here is a 304-residue protein sequence, read N- to C-terminus: MGQCVTKCKNPSSTLGSKNGDRDPSSKSHSRRGASHREEQVPPCGKPAGDILVNGTKKAEAATEACQLPTSSGDAGRESKTNAEESSLQRLEELFRRYKDEREDAILEEGMERFCNDLCVDPTEFRVLLLAWKFQAATMCKFTRKEFFDGCKAISADSIDGICARFPSLLTEAKQEDKFKDLYRFTFQFGLDSEEGQRSLHREIAIALWKLVFTQNNPPVLDQWLNFLTENPSGIKGISRDTWNMFLNFTQVIGPDLSNYSEDEAWPSLFDTFVEWEMERRKREVEGRGALSSGPEGLCPEEQT.

Disordered stretches follow at residues 1 to 87 (MGQC…EESS) and 285 to 304 (VEGR…EEQT). The N-myristoyl glycine moiety is linked to residue Gly2. Residues 86 to 278 (SSLQRLEELF…LFDTFVEWEM (193 aa)) form the DCUN1 domain.

As to quaternary structure, part of a complex containing DCUN1D3, CUL3 and RBX1. Interacts (via the DCUN1 domain) with the unneddylated cullins: interacts with CUL1, CUL2, CUL3, CUL4A, CUL4B and CUL5; these interactions promote the cullin neddylation and the identity of the cullin dictates the affinity of the interaction. Interacts preferentially with CUL3; this interaction triggers the relocalization of CUL3 to the cell membrane where CUL3 is neddylated. Interacts (via DCUN1 domain) with RBX1. May also interact with regulators or subunits of cullin-RING ligases such as RNF7, ELOB and DDB1; these interactions are bridged by cullins. Interacts (via DCUN1 domain) with CAND1; this interaction is bridged by cullins and strongly inhibits cullin neddylation. These CAND-cullin-DCNL complexes can only be neddylated in the presence of a substrate adapter. Interacts (via DCUN1 domain) with the N-terminally acetylated form of UBE2M and UBE2F.

The protein resides in the cell membrane. It is found in the cytoplasm. It localises to the nucleus. The protein localises to the perinuclear region. Contributes to the neddylation of all cullins by transferring NEDD8 from N-terminally acetylated NEDD8-conjugating E2s enzyme to different cullin C-terminal domain-RBX complexes and may play a role in the cell cycle progression by regulating the SCF ubiquitin E3 ligase complex, after UV damage. At the cell membrane, can promote and as well inhibit cullins neddylation. This is DCN1-like protein 3 from Rattus norvegicus (Rat).